The following is a 256-amino-acid chain: Proteasome subunit alpha (256 aa).

The disordered stretch occupies residues 235-256 (ELDSNGSDGNGDAPELNGGSSD).

It belongs to the peptidase T1A family. The 20S proteasome core is composed of 14 alpha and 14 beta subunits that assemble into four stacked heptameric rings, resulting in a barrel-shaped structure. The two inner rings, each composed of seven catalytic beta subunits, are sandwiched by two outer rings, each composed of seven alpha subunits. The catalytic chamber with the active sites is on the inside of the barrel. Has a gated structure, the ends of the cylinder being occluded by the N-termini of the alpha-subunits. Is capped by the proteasome-associated ATPase, ARC.

Its subcellular location is the cytoplasm. The protein operates within protein degradation; proteasomal Pup-dependent pathway. Its activity is regulated as follows. The formation of the proteasomal ATPase ARC-20S proteasome complex, likely via the docking of the C-termini of ARC into the intersubunit pockets in the alpha-rings, may trigger opening of the gate for substrate entry. Interconversion between the open-gate and close-gate conformations leads to a dynamic regulation of the 20S proteasome proteolysis activity. Its function is as follows. Component of the proteasome core, a large protease complex with broad specificity involved in protein degradation. The protein is Proteasome subunit alpha of Mycolicibacterium paratuberculosis (strain ATCC BAA-968 / K-10) (Mycobacterium paratuberculosis).